Reading from the N-terminus, the 214-residue chain is Probable transaldolase (214 aa).

Lysine 83 acts as the Schiff-base intermediate with substrate in catalysis.

This sequence belongs to the transaldolase family. Type 3B subfamily.

It localises to the cytoplasm. The enzyme catalyses D-sedoheptulose 7-phosphate + D-glyceraldehyde 3-phosphate = D-erythrose 4-phosphate + beta-D-fructose 6-phosphate. It participates in carbohydrate degradation; pentose phosphate pathway; D-glyceraldehyde 3-phosphate and beta-D-fructose 6-phosphate from D-ribose 5-phosphate and D-xylulose 5-phosphate (non-oxidative stage): step 2/3. Its function is as follows. Transaldolase is important for the balance of metabolites in the pentose-phosphate pathway. This is Probable transaldolase from Streptococcus equi subsp. zooepidemicus (strain H70).